The primary structure comprises 88 residues: Putative membrane protein insertion efficiency factor (88 aa).

The disordered stretch occupies residues 67–88; sequence LNAGGYDPVPPKSDNHSKENKK. Basic and acidic residues predominate over residues 79 to 88; the sequence is SDNHSKENKK.

Belongs to the UPF0161 family.

The protein localises to the cell inner membrane. Its function is as follows. Could be involved in insertion of integral membrane proteins into the membrane. The protein is Putative membrane protein insertion efficiency factor of Actinobacillus succinogenes (strain ATCC 55618 / DSM 22257 / CCUG 43843 / 130Z).